Reading from the N-terminus, the 447-residue chain is Tubulin alpha-1 chain (447 aa).

GTP-binding residues include Gln11, Glu72, Ser141, Gly145, Thr146, Thr180, Asn207, and Asn229. Glu72 is a Mg(2+) binding site. Glu255 is a catalytic residue.

It belongs to the tubulin family. Dimer of alpha and beta chains. A typical microtubule is a hollow water-filled tube with an outer diameter of 25 nm and an inner diameter of 15 nM. Alpha-beta heterodimers associate head-to-tail to form protofilaments running lengthwise along the microtubule wall with the beta-tubulin subunit facing the microtubule plus end conferring a structural polarity. Microtubules usually have 13 protofilaments but different protofilament numbers can be found in some organisms and specialized cells. Requires Mg(2+) as cofactor.

It is found in the cytoplasm. The protein localises to the cytoskeleton. It carries out the reaction GTP + H2O = GDP + phosphate + H(+). In terms of biological role, tubulin is the major constituent of microtubules, a cylinder consisting of laterally associated linear protofilaments composed of alpha- and beta-tubulin heterodimers. Microtubules grow by the addition of GTP-tubulin dimers to the microtubule end, where a stabilizing cap forms. Below the cap, tubulin dimers are in GDP-bound state, owing to GTPase activity of alpha-tubulin. This Saccharomyces cerevisiae (strain ATCC 204508 / S288c) (Baker's yeast) protein is Tubulin alpha-1 chain (TUB1).